Consider the following 472-residue polypeptide: Pentatricopeptide repeat-containing protein At3g18970 (472 aa).

8 PPR repeats span residues 107–139 (NERTFVFVLGACARSASSSALRVGRIVHGMVKK), 146–180 (SELIGTTLLHFYAKNGDLRYARKVFDEMPERTSVT), 181–216 (WNAMIGGYCSHKDKGNHNARKAMVLFRRFSCCGSGV), 219–253 (TDTTMVCVLSAISQTGLLEIGSLVHGYIEKLGFTP), 256–286 (DVFIGTALVDMYSKCGCLNNAFSVFELMKVK), 287–321 (NVFTWTSMATGLALNGRGNETPNLLNRMAESGIKP), 322–352 (NEITFTSLLSAYRHIGLVEEGIELFKSMKTR), and 358–388 (VIEHYGCIVDLLGKAGRIQEAYQFILAMPIK). Positions 393–472 (LLRSLCNACS…IKTRPGYSFV (80 aa)) are type E motif; degenerate.

Belongs to the PPR family. PCMP-E subfamily.

This Arabidopsis thaliana (Mouse-ear cress) protein is Pentatricopeptide repeat-containing protein At3g18970 (PCMP-E93).